A 44-amino-acid polypeptide reads, in one-letter code: pyr operon leader peptide (44 aa).

The protein is pyr operon leader peptide (pyrL) of Shigella flexneri.